The sequence spans 123 residues: Probable cytochrome c 2.2 (123 aa).

The tract at residues 1 to 21 (MGKKKSDTASGGAIPEGDNEK) is disordered. Heme c contacts are provided by Cys30, Cys33, His34, and Met95.

The protein belongs to the cytochrome c family. Post-translationally, binds 1 heme c group covalently per subunit.

The protein localises to the mitochondrion intermembrane space. Electron carrier protein. The oxidized form of the cytochrome c heme group can accept an electron from the heme group of the cytochrome c1 subunit of cytochrome reductase. Cytochrome c then transfers this electron to the cytochrome oxidase complex, the final protein carrier in the mitochondrial electron-transport chain. The chain is Probable cytochrome c 2.2 (cyc-2.2) from Caenorhabditis elegans.